The chain runs to 196 residues: Interferon lambda-3 (196 aa).

An N-terminal signal peptide occupies residues 1 to 21 (MTGDCMPVLVLMAAVLTVTGA). Intrachain disulfides connect Cys37/Cys136, Cys71/Cys169, and Cys188/Cys195.

This sequence belongs to the lambda interferon family.

The protein localises to the secreted. In terms of biological role, cytokine with antiviral, antitumour and immunomodulatory activities. Plays a critical role in the antiviral host defense, predominantly in the epithelial tissues. Acts as a ligand for the heterodimeric class II cytokine receptor composed of IL10RB and IFNLR1, and receptor engagement leads to the activation of the JAK/STAT signaling pathway resulting in the expression of IFN-stimulated genes (ISG), which mediate the antiviral state. Has a restricted receptor distribution and therefore restricted targets: is primarily active in epithelial cells and this cell type-selective action is because of the epithelial cell-specific expression of its receptor IFNLR1. Seems not to be essential for early virus-activated host defense in vaginal infection, but plays an important role in Toll-like receptor (TLR)-induced antiviral defense. Plays a significant role in the antiviral immune defense in the intestinal epithelium. Exerts an immunomodulatory effect by up-regulating MHC class I antigen expression. The protein is Interferon lambda-3 (IFNL3) of Homo sapiens (Human).